A 74-amino-acid polypeptide reads, in one-letter code: Protein krueppel (74 aa).

C2H2-type zinc fingers lie at residues 1 to 4 (ERTH), 10 to 32 (FECP…MRLH), 38 to 60 (YHCS…LRVH), and 66 to 74 (YACELCDAR).

It belongs to the krueppel C2H2-type zinc-finger protein family.

It localises to the nucleus. Its function is as follows. Krueppel is a gap class segmentation protein. The polypeptide is Protein krueppel (Kr) (Psychoda cinerea (Psychod fly)).